Here is a 361-residue protein sequence, read N- to C-terminus: MAAADEPKPKKLKVEAPEALSENVLFGMGNPLLDISAVVDKDFLDKYSLKPNDQILAEDKHKELFDELVKKFKVEYHAGGSTQNSMKVAQWMIQEPHRAATFFGCIGIDKFGEILKSKAADAHVDAHYYEQNEQPTGTCAACITGGNRSLVANLAAANCYKKEKHLDLENNWMLVEKARVYYIAGFFLTVSPESVLKVARYAAENNRTFTLNLSAPFISQFFKEALMEVMPYVDILFGNETEAATFAREQGFETKDIKEIARKTQALPKVNSKRQRTVIFTQGRDDTIVATGNDVTAFPVLDQNQEEIVDTNGAGDAFVGGFLSQLVSNKPLTECIRAGHYAASVIIRRTGCTFPEKPDFH.

Residues Pro-7–Glu-15 carry the Nuclear localization signal motif. Residue Asp-34 coordinates adenosine. Position 48 (Ser-48) interacts with Mg(2+). Residue Tyr-76 is modified to Phosphotyrosine. Asn-147 is a Mg(2+) binding site. Gln-305 serves as a coordination point for adenosine. Asp-316 is an active-site residue. The Proton acceptor role is filled by Asp-316.

This sequence belongs to the carbohydrate kinase PfkB family. As to quaternary structure, monomer. It depends on Mg(2+) as a cofactor.

Its subcellular location is the nucleus. The enzyme catalyses adenosine + ATP = AMP + ADP + H(+). It functions in the pathway purine metabolism; AMP biosynthesis via salvage pathway; AMP from adenosine: step 1/1. Its function is as follows. Catalyzes the phosphorylation of the purine nucleoside adenosine at the 5' position in an ATP-dependent manner. Serves as a potential regulator of concentrations of extracellular adenosine and intracellular adenine nucleotides. This Rattus norvegicus (Rat) protein is Adenosine kinase (Adk).